The chain runs to 272 residues: MPSFVVIGNPIGHSKSPRIHQLFAEQTGIAHPYESLCAPLAGFEQTARSFFAKDGGGANVTLPFKQQACKLADELTERAALSGAVNTLKKLDDGRLVGDNTDGIGLLSDLERLDLIKPDDRILLIGAGGAARGVILPLLSFGCRLTVTNRTQEKAEDLAQLFKHSGHIDSMVKEQLAAGRFDLVINATSSGVGGGIPDIPEGLIGDHTRCYDMFYQAGDTPFLHWCRQQGAFQMADGLGMLVGQAAHSFMLWHGIMPQITPAIAVLKAEMGA.

Shikimate is bound by residues 14 to 16 and Thr61; that span reads SKS. The Proton acceptor role is filled by Lys65. Glu77 contributes to the NADP(+) binding site. Shikimate contacts are provided by Asn86 and Asp102. Residues 126 to 130, 149 to 154, and Met213 each bind NADP(+); these read GAGGA and NRTQEK. Position 215 (Tyr215) interacts with shikimate. Gly237 is a binding site for NADP(+).

The protein belongs to the shikimate dehydrogenase family. Homodimer.

It carries out the reaction shikimate + NADP(+) = 3-dehydroshikimate + NADPH + H(+). The protein operates within metabolic intermediate biosynthesis; chorismate biosynthesis; chorismate from D-erythrose 4-phosphate and phosphoenolpyruvate: step 4/7. Functionally, involved in the biosynthesis of the chorismate, which leads to the biosynthesis of aromatic amino acids. Catalyzes the reversible NADPH linked reduction of 3-dehydroshikimate (DHSA) to yield shikimate (SA). In Erwinia tasmaniensis (strain DSM 17950 / CFBP 7177 / CIP 109463 / NCPPB 4357 / Et1/99), this protein is Shikimate dehydrogenase (NADP(+)).